Consider the following 375-residue polypeptide: Chaperone protein DnaJ (375 aa).

The J domain occupies 5-70 (DYYSLLEVER…QKRAAYDRYG (66 aa)). Residues 135–213 (GKTVDIEIDV…CHGEGRCEKH (79 aa)) form a CR-type zinc finger. The Zn(2+) site is built by Cys-148, Cys-151, Cys-165, Cys-168, Cys-187, Cys-190, Cys-201, and Cys-204. CXXCXGXG motif repeat units lie at residues 148–155 (CDACHGSG), 165–172 (CDTCHGSG), 187–194 (CPVCQGKG), and 201–208 (CPECHGEG).

Belongs to the DnaJ family. In terms of assembly, homodimer. Requires Zn(2+) as cofactor.

It localises to the cytoplasm. Functionally, participates actively in the response to hyperosmotic and heat shock by preventing the aggregation of stress-denatured proteins and by disaggregating proteins, also in an autonomous, DnaK-independent fashion. Unfolded proteins bind initially to DnaJ; upon interaction with the DnaJ-bound protein, DnaK hydrolyzes its bound ATP, resulting in the formation of a stable complex. GrpE releases ADP from DnaK; ATP binding to DnaK triggers the release of the substrate protein, thus completing the reaction cycle. Several rounds of ATP-dependent interactions between DnaJ, DnaK and GrpE are required for fully efficient folding. Also involved, together with DnaK and GrpE, in the DNA replication of plasmids through activation of initiation proteins. This Zymomonas mobilis subsp. mobilis (strain ATCC 31821 / ZM4 / CP4) protein is Chaperone protein DnaJ.